Here is a 176-residue protein sequence, read N- to C-terminus: NAD(P)H-quinone oxidoreductase subunit 6, chloroplastic (176 aa).

Transmembrane regions (helical) follow at residues 10-30, 32-52, 61-81, 92-112, and 152-172; these read FLLVFLGLGLILGGLGVVLLA, PIYSAFSLGLVFVCISLFYIL, AQLLIYVGAINVLIIFAVMFI, LWTVGDGVTSVVCTSLFVSLI, and FFIPFEFISIILLVALIGAIA.

Belongs to the complex I subunit 6 family. NDH is composed of at least 16 different subunits, 5 of which are encoded in the nucleus.

It is found in the plastid. It localises to the chloroplast thylakoid membrane. It catalyses the reaction a plastoquinone + NADH + (n+1) H(+)(in) = a plastoquinol + NAD(+) + n H(+)(out). The catalysed reaction is a plastoquinone + NADPH + (n+1) H(+)(in) = a plastoquinol + NADP(+) + n H(+)(out). Functionally, NDH shuttles electrons from NAD(P)H:plastoquinone, via FMN and iron-sulfur (Fe-S) centers, to quinones in the photosynthetic chain and possibly in a chloroplast respiratory chain. The immediate electron acceptor for the enzyme in this species is believed to be plastoquinone. Couples the redox reaction to proton translocation, and thus conserves the redox energy in a proton gradient. In Helianthus annuus (Common sunflower), this protein is NAD(P)H-quinone oxidoreductase subunit 6, chloroplastic (ndhG).